The primary structure comprises 395 residues: NAD(P)H-quinone oxidoreductase subunit H, chloroplastic (395 aa).

It belongs to the complex I 49 kDa subunit family. In terms of assembly, NDH is composed of at least 16 different subunits, 5 of which are encoded in the nucleus.

It localises to the plastid. The protein localises to the chloroplast thylakoid membrane. It catalyses the reaction a plastoquinone + NADH + (n+1) H(+)(in) = a plastoquinol + NAD(+) + n H(+)(out). The catalysed reaction is a plastoquinone + NADPH + (n+1) H(+)(in) = a plastoquinol + NADP(+) + n H(+)(out). Functionally, NDH shuttles electrons from NAD(P)H:plastoquinone, via FMN and iron-sulfur (Fe-S) centers, to quinones in the photosynthetic chain and possibly in a chloroplast respiratory chain. The immediate electron acceptor for the enzyme in this species is believed to be plastoquinone. Couples the redox reaction to proton translocation, and thus conserves the redox energy in a proton gradient. In Dioscorea elephantipes (Elephant's foot yam), this protein is NAD(P)H-quinone oxidoreductase subunit H, chloroplastic.